A 309-amino-acid polypeptide reads, in one-letter code: MIKVYAPASIGNVSVGFDVLGAAVSPVNGALLGDCVTVRAAKSFSLRNEGQFVGKLPEKLEHNIVYQCWQLFCQHLGKQLPVEMTLEKNMPIGSGLGSSACSVVAGLMALNEFAGLPFNESQLLAMMGELEGRISGSIHYDNVAPCYLGGLQLIMEQGDIICQPVPSFDEWLWVMAYPGIKVSTAEARAILPVKYSKQDVIDHGRFLAGFIHACHTRQPALAARLMKDVVAEPYRTQLLPGFANARETAKRVGALACGISGSGPTLFSICNDIATAEEIAEWLQQHYVQNDEGFVHICRLDLAGARQIG.

91–101 (PIGSGLGSSAC) lines the ATP pocket.

The protein belongs to the GHMP kinase family. Homoserine kinase subfamily.

It is found in the cytoplasm. It carries out the reaction L-homoserine + ATP = O-phospho-L-homoserine + ADP + H(+). It participates in amino-acid biosynthesis; L-threonine biosynthesis; L-threonine from L-aspartate: step 4/5. Catalyzes the ATP-dependent phosphorylation of L-homoserine to L-homoserine phosphate. The sequence is that of Homoserine kinase from Photorhabdus laumondii subsp. laumondii (strain DSM 15139 / CIP 105565 / TT01) (Photorhabdus luminescens subsp. laumondii).